Reading from the N-terminus, the 165-residue chain is Nucleotide-binding protein MXAN_1478 (165 aa).

The protein belongs to the YajQ family.

Its function is as follows. Nucleotide-binding protein. This is Nucleotide-binding protein MXAN_1478 from Myxococcus xanthus (strain DK1622).